A 480-amino-acid chain; its full sequence is Flap endonuclease 1 (480 aa).

The N-domain stretch occupies residues 1–106 (MGIKGLTKFI…SELEKRGEKR (106 aa)). D34 provides a ligand contact to Mg(2+). Positions 47 and 72 each coordinate DNA. D88, E160, E162, D181, and D183 together coordinate Mg(2+). Positions 124 to 266 (EIKKQSGRTV…KTAYNLIKEY (143 aa)) are I-domain. E160 lines the DNA pocket. Positions 244 and 246 each coordinate DNA. D246 serves as a coordination point for Mg(2+). Residues 349–357 (TQRRLDTFF) form an interaction with PCNA region. The segment at 379-461 (TKGKGKKREI…NIKNENVKED (83 aa)) is disordered. The segment covering 404–428 (NVKDEKKNNEKVDELKNKSDENLVK) has biased composition (basic and acidic residues). The segment covering 429 to 438 (DEEDDQDDYD) has biased composition (acidic residues).

It belongs to the XPG/RAD2 endonuclease family. FEN1 subfamily. In terms of assembly, interacts with PCNA. Three molecules of FEN1 bind to one PCNA trimer with each molecule binding to one PCNA monomer. PCNA stimulates the nuclease activity without altering cleavage specificity. Mg(2+) is required as a cofactor. Post-translationally, phosphorylated. Phosphorylation upon DNA damage induces relocalization to the nuclear plasma.

It localises to the nucleus. Its subcellular location is the nucleolus. It is found in the nucleoplasm. The protein resides in the mitochondrion. Inhibited by monovalent metal ions. Functionally, structure-specific nuclease with 5'-flap endonuclease and 5'-3' exonuclease activities involved in DNA replication and repair. During DNA replication, cleaves the 5'-overhanging flap structure that is generated by displacement synthesis when DNA polymerase encounters the 5'-end of a downstream Okazaki fragment. It enters the flap from the 5'-end and then tracks to cleave the flap base, leaving a nick for ligation. Also involved in the long patch base excision repair (LP-BER) pathway, by cleaving within the apurinic/apyrimidinic (AP) site-terminated flap. Acts as a genome stabilization factor that prevents flaps from equilibrating into structures that lead to duplications and deletions. Also possesses 5'-3' exonuclease activity on nicked or gapped double-stranded DNA, and exhibits RNase H activity. Also involved in replication and repair of rDNA and in repairing mitochondrial DNA. The chain is Flap endonuclease 1 from Plasmodium yoelii yoelii.